The primary structure comprises 567 residues: uncharacterized protein (567 aa).

The disordered stretch occupies residues 1-26 (MPSEKATTRHLPGAVETLSPRTGRRP). Transmembrane regions (helical) follow at residues 57–77 (AILV…TVAF), 90–110 (VSFG…TYWL), 142–162 (VALA…IIYG), 173–193 (LFSM…LTEF), 221–241 (MLVW…TAIF), and 257–277 (VLIL…ILAW). In terms of domain architecture, HAMP spans 277–329 (WLTATPVRVVREALNRVEQGDLSGDLVVFDGTELGELQRGFNRMVEGLRERER). The Guanylate cyclase domain occupies 361 to 485 (AVVFVDIVGS…EPVNEAARLC (125 aa)).

It belongs to the adenylyl cyclase class-3 family.

Its subcellular location is the cell membrane. This is an uncharacterized protein from Mycobacterium bovis (strain ATCC BAA-935 / AF2122/97).